A 677-amino-acid chain; its full sequence is Protein windpipe (677 aa).

The first 20 residues, 1 to 20 (MERVHLTAWLALFLIVVANA), serve as a signal peptide directing secretion. Residues 21–451 (TPTPARTPTG…IGKPKDDSSA (431 aa)) are Extracellular-facing. Residues N53 and N80 are each glycosylated (N-linked (GlcNAc...) asparagine). 4 LRR repeats span residues 91-116 (LPEL…GLKR), 118-133 (NLKH…RKLP), 134-156 (QHLQ…LTHM), and 158-183 (QLHQ…NWLV). Residues N145 and N170 are each glycosylated (N-linked (GlcNAc...) asparagine). An LRRCT domain is found at 184–216 (ERIVYMEHPVVCSYPLEFRGRSWLQLKQDEICK). Disordered stretches follow at residues 264-285 (AKKV…SGDL), 298-317 (TVAE…ASPS), and 325-385 (KDED…TVFS). A compositionally biased stretch (basic and acidic residues) spans 347-372 (SKVKITSEDDIDSDGKPEESDVRPLE). Polar residues predominate over residues 374–385 (PENSENPDTVFS). A helical membrane pass occupies residues 452-472 (IYYLLAVIGLIVVGLVLFVAI). Topologically, residues 473-677 (KRCKYDSNAA…EPTHQVINGH (205 aa)) are cytoplasmic. 2 disordered regions span residues 502 to 523 (LGKP…LIGE) and 539 to 677 (NGEA…INGH). Over residues 595–607 (AQQQQLAEQNNNE) the composition is skewed to low complexity.

In terms of assembly, interacts with dome; the interaction promotes internalization of dome and its subsequent lysosomal degradation. In terms of tissue distribution, in adult intestine, expressed in both small progenitor cells and large nuclei enterocytes (at protein level). During embryogenesis, restricted to the developing trachea.

Its subcellular location is the cell membrane. Its function is as follows. Plays a role in negative regulation of the JAK/STAT pathway by binding to the receptor dome and promoting its internalization for subsequent lysosomal degradation, thereby reducing JAK/STAT signaling. This chain is Protein windpipe, found in Drosophila melanogaster (Fruit fly).